Here is a 277-residue protein sequence, read N- to C-terminus: 4-hydroxy-3-methylbut-2-enyl diphosphate reductase (277 aa).

Cysteine 12 contributes to the [4Fe-4S] cluster binding site. (2E)-4-hydroxy-3-methylbut-2-enyl diphosphate-binding residues include histidine 36 and histidine 70. Dimethylallyl diphosphate-binding residues include histidine 36 and histidine 70. Isopentenyl diphosphate contacts are provided by histidine 36 and histidine 70. Residue cysteine 92 participates in [4Fe-4S] cluster binding. Histidine 120 contacts (2E)-4-hydroxy-3-methylbut-2-enyl diphosphate. Histidine 120 is a dimethylallyl diphosphate binding site. Histidine 120 contacts isopentenyl diphosphate. The active-site Proton donor is glutamate 122. Residue threonine 160 coordinates (2E)-4-hydroxy-3-methylbut-2-enyl diphosphate. Cysteine 188 is a [4Fe-4S] cluster binding site. (2E)-4-hydroxy-3-methylbut-2-enyl diphosphate is bound by residues serine 216, serine 217, asparagine 218, and serine 260. Dimethylallyl diphosphate-binding residues include serine 216, serine 217, asparagine 218, and serine 260. Positions 216, 217, 218, and 260 each coordinate isopentenyl diphosphate.

Belongs to the IspH family. The cofactor is [4Fe-4S] cluster.

It catalyses the reaction isopentenyl diphosphate + 2 oxidized [2Fe-2S]-[ferredoxin] + H2O = (2E)-4-hydroxy-3-methylbut-2-enyl diphosphate + 2 reduced [2Fe-2S]-[ferredoxin] + 2 H(+). The enzyme catalyses dimethylallyl diphosphate + 2 oxidized [2Fe-2S]-[ferredoxin] + H2O = (2E)-4-hydroxy-3-methylbut-2-enyl diphosphate + 2 reduced [2Fe-2S]-[ferredoxin] + 2 H(+). It participates in isoprenoid biosynthesis; dimethylallyl diphosphate biosynthesis; dimethylallyl diphosphate from (2E)-4-hydroxy-3-methylbutenyl diphosphate: step 1/1. Its pathway is isoprenoid biosynthesis; isopentenyl diphosphate biosynthesis via DXP pathway; isopentenyl diphosphate from 1-deoxy-D-xylulose 5-phosphate: step 6/6. In terms of biological role, catalyzes the conversion of 1-hydroxy-2-methyl-2-(E)-butenyl 4-diphosphate (HMBPP) into a mixture of isopentenyl diphosphate (IPP) and dimethylallyl diphosphate (DMAPP). Acts in the terminal step of the DOXP/MEP pathway for isoprenoid precursor biosynthesis. The sequence is that of 4-hydroxy-3-methylbut-2-enyl diphosphate reductase from Sulfurovum sp. (strain NBC37-1).